Here is a 534-residue protein sequence, read N- to C-terminus: MALPSLHEFPWLTTVIAYPVLAALFIPLIPAPAGDPSTRAYAQKLAERIRWFALFIAVTDLLILLAGFYVGYDPGQTGLQLLERYTWVPQVGLSWSVGADGLSMPLILLTAFITTLAILAAWPVTLKPRLFYFLMLAMYGGQIGVFAVQDMLLFFLMWELELIPVYLLLSIWGGANRLYAATKFILYTALSSLFILVAGLAMAFYGDPISFDMTDLAHKTYPLTFQLLMYGAFLIAYGVKLPIFPLHTWLPDAHGEATAPVHMLLAGILLKMGGYALMRMNAGMLPDAHLYFAPVLIVLGVVNIIFAALTSFAQRNLKRKIACSSISHMGFVLIGIGSLTEIGMSGAMLQMISHGLIGASLFFLVGATYDRTHTLELEEMGGVGLKMPKIFSMFTACSLASLALPGMSGFVAEIMVFIGMATTDAYSLPFRLVVVFLAAVGVILTPIYLLSMLRQIFFGPENKELTEHEELVDAEPREVFIIACLLIPIIGIGLYPKLVTSLYDQSTNALVALLRQELPQTGETVAQAPALYNN.

14 helical membrane passes run 9 to 29, 51 to 71, 106 to 126, 130 to 150, 152 to 172, 184 to 204, 227 to 247, 258 to 278, 290 to 310, 326 to 346, 347 to 367, 399 to 419, 432 to 452, and 479 to 499; these read FPWL…IPLI, WFAL…FYVG, LILL…PVTL, LFYF…AVQD, LLFF…LSIW, FILY…AMAF, LLMY…FPLH, TAPV…YALM, LYFA…AALT, ISHM…GMSG, AMLQ…LVGA, LASL…VFIG, LVVV…LLSM, and VFII…PKLV.

Belongs to the complex I subunit 4 family.

It localises to the cellular thylakoid membrane. The catalysed reaction is a plastoquinone + NADH + (n+1) H(+)(in) = a plastoquinol + NAD(+) + n H(+)(out). It carries out the reaction a plastoquinone + NADPH + (n+1) H(+)(in) = a plastoquinol + NADP(+) + n H(+)(out). NDH-1 shuttles electrons from NAD(P)H, via FMN and iron-sulfur (Fe-S) centers, to quinones in the respiratory chain. The immediate electron acceptor for the enzyme in this species is believed to be plastoquinone. Couples the redox reaction to proton translocation (for every two electrons transferred, four hydrogen ions are translocated across the cytoplasmic membrane), and thus conserves the redox energy in a proton gradient. The protein is NAD(P)H-quinone oxidoreductase chain 4 2 of Synechococcus sp. (strain JA-2-3B'a(2-13)) (Cyanobacteria bacterium Yellowstone B-Prime).